Reading from the N-terminus, the 503-residue chain is MVLVLDFGSQYTRLIARRLRELRAFSLILPGDAPLEEVLKHRPQALILSGGPRSVFDPDAPRPDPRLFSSGLPLLGICYGMQLLAQELGGRVERAGRAEYGKALLTRHEGPLFRGLEGEVQVWMSHQDAVTAPPPGWRVVAETEENPVAAIASPDGRAYGVQFHPEVAHTPKGMQILENFLELAGVKRDWTPEHVLEELLREVRERAGKDRVLLAVSGGVDSSTLALLLAKAGVDHLAVFVDHGLLRLGEREEVEGALRALGVNLLVVDAKERFLKALKGVEDPEEKRKIIGREFVAAFSQVARERGPFRFLAQGTLYPDVIESAGGHGAAKIKSHHNVGGLPEDLEFELLEPFRLLFKDEVRELALLLGLPDTLRLRHPFPGPGLAVRVLGEVTEERLEILRRADDIFTSLLREWGLYEKVAQALAVLTPVRSVGVAGDERKYGYVLALRAVTTEDFMTADWARLPLEFLDEAARRITRRVPEIGRVVYDLTSKPPATIEWE.

A Glutamine amidotransferase type-1 domain is found at 1–189; sequence MVLVLDFGSQ…FLELAGVKRD (189 aa). C78 acts as the Nucleophile in catalysis. Residues H164 and E166 contribute to the active site. The region spanning 190 to 378 is the GMPS ATP-PPase domain; that stretch reads WTPEHVLEEL…LGLPDTLRLR (189 aa). 217 to 223 contributes to the ATP binding site; sequence SGGVDSS.

In terms of assembly, homodimer.

The catalysed reaction is XMP + L-glutamine + ATP + H2O = GMP + L-glutamate + AMP + diphosphate + 2 H(+). Its pathway is purine metabolism; GMP biosynthesis; GMP from XMP (L-Gln route): step 1/1. Catalyzes the synthesis of GMP from XMP. The protein is GMP synthase [glutamine-hydrolyzing] of Thermus thermophilus (strain ATCC 27634 / DSM 579 / HB8).